The primary structure comprises 516 residues: tRNA-2-methylthio-N(6)-dimethylallyladenosine synthase (516 aa).

One can recognise an MTTase N-terminal domain in the interval 17–133 (RSFEVRTFGC…LPSLLSRSEH (117 aa)). [4Fe-4S] cluster contacts are provided by C26, C62, C96, C170, C174, and C177. In terms of domain architecture, Radical SAM core spans 156–392 (RESAYAGWVS…LALQERISTE (237 aa)). The 72-residue stretch at 395-466 (AKLIGTEVEL…PFFLIADSGV (72 aa)) folds into the TRAM domain. Disordered regions lie at residues 409–438 (SGGR…QGHV) and 492–516 (GLGL…GCGC). Basic and acidic residues predominate over residues 412-438 (RKNDKTQRMTGRSRDGRLVHFDPQGHV).

It belongs to the methylthiotransferase family. MiaB subfamily. As to quaternary structure, monomer. [4Fe-4S] cluster is required as a cofactor.

It is found in the cytoplasm. The catalysed reaction is N(6)-dimethylallyladenosine(37) in tRNA + (sulfur carrier)-SH + AH2 + 2 S-adenosyl-L-methionine = 2-methylsulfanyl-N(6)-dimethylallyladenosine(37) in tRNA + (sulfur carrier)-H + 5'-deoxyadenosine + L-methionine + A + S-adenosyl-L-homocysteine + 2 H(+). In terms of biological role, catalyzes the methylthiolation of N6-(dimethylallyl)adenosine (i(6)A), leading to the formation of 2-methylthio-N6-(dimethylallyl)adenosine (ms(2)i(6)A) at position 37 in tRNAs that read codons beginning with uridine. The sequence is that of tRNA-2-methylthio-N(6)-dimethylallyladenosine synthase from Corynebacterium diphtheriae (strain ATCC 700971 / NCTC 13129 / Biotype gravis).